A 216-amino-acid chain; its full sequence is Corrinoid protein DSY3155 (216 aa).

The B12-binding N-terminal domain maps to 1-90; the sequence is MIMSLLDELK…EIAKKGMSEG (90 aa). One can recognise a B12-binding domain in the interval 93 to 216; that stretch reads KGKIVLGTVE…VELANKILGK (124 aa). H106 is a binding site for methylcob(III)alamin.

It belongs to the methylamine corrinoid protein family.

In terms of biological role, probably harbors a corrinoid prosthetic group and acts as a methyl group carrier between MtgB and MtgA. A methyl group from glycine betaine is likely first transferred to the corrinoid prosthetic group of the enzyme by MtgB, and then transferred to tetrahydrofolate (THF) by MtgA. The methyl group may then be ultimately converted to carbon dioxide, and its oxidation would also provide reducing equivalents for anaerobic respiration. Thus, may function in the pathway that allows anaerobic methylotrophic growth of D.hafniense using glycine betaine. This chain is Corrinoid protein DSY3155, found in Desulfitobacterium hafniense (strain Y51).